The chain runs to 744 residues: MAVLPGPLQLLGVLLTISLSSIRLIQAGAYYGIKPLPPQIPPQMPPQIPQYQPLGQQVPHMPLAKDGLAMGKEMPHLQYGKEYPHLPQYMKEIQPAPRMGKEAVPKKGKEIPLASLRGEQGPRGEPGPRGPPGPPGLPGHGIPGIKGKPGPQGYPGVGKPGMPGMPGKPGAMGMPGAKGEIGQKGEIGPMGIPGPQGPPGPHGLPGIGKPGGPGLPGQPGPKGDRGPKGLPGPQGLRGPKGDKGFGMPGAPGVKGPPGMHGPPGPVGLPGVGKPGVTGFPGPQGPLGKPGAPGEPGPQGPIGVPGVQGPPGIPGIGKPGQDGIPGQPGFPGGKGEQGLPGLPGPPGLPGIGKPGFPGPKGDRGMGGVPGALGPRGEKGPIGAPGIGGPPGEPGLPGIPGPMGPPGAIGFPGPKGEGGIVGPQGPPGPKGEPGLQGFPGKPGFLGEVGPPGMRGLPGPIGPKGEAGQKGVPGLPGVPGLLGPKGEPGIPGDQGLQGPPGIPGIGGPSGPIGPPGIPGPKGEPGLPGPPGFPGIGKPGVAGLHGPPGKPGALGPQGQPGLPGPPGPPGPPGPPAVMPPTPPPQGEYLPDMGLGIDGVKPPHAYGAKKGKNGGPAYEMPAFTAELTAPFPPVGAPVKFNKLLYNGRQNYNPQTGIFTCEVPGVYYFAYHVHCKGGNVWVALFKNNEPVMYTYDEYKKGFLDQASGSAVLLLRPGDRVFLQMPSEQAAGLYAGQYVHSSFSGYLLYPM.

Residues 1-27 (MAVLPGPLQLLGVLLTISLSSIRLIQA) form the signal peptide. Residues 29 to 117 (AYYGIKPLPP…GKEIPLASLR (89 aa)) form a nonhelical region (NC2) region. Disordered regions lie at residues 115-393 (SLRG…GEPG) and 459-589 (GPKG…PDMG). The segment at 118–571 (GEQGPRGEPG…PGPPGPPGPP (454 aa)) is triple-helical region (COL1). Over residues 128-137 (PRGPPGPPGL) the composition is skewed to pro residues. The span at 168 to 178 (KPGAMGMPGAK) shows a compositional bias: low complexity. Gly residues-rich tracts occupy residues 203–217 (GLPG…GLPG) and 328–337 (GFPGGKGEQG). Composition is skewed to low complexity over residues 466–496 (QKGV…LQGP) and 538–556 (AGLH…QGQP). Positions 558–581 (LPGPPGPPGPPGPPAVMPPTPPPQ) are enriched in pro residues. The tract at residues 572–744 (AVMPPTPPPQ…SFSGYLLYPM (173 aa)) is nonhelical region (NC1). Positions 611–744 (PAYEMPAFTA…SFSGYLLYPM (134 aa)) constitute a C1q domain.

Homotrimers, or heterotrimers in association with alpha 2(VIII) type collagens. Four homotrimers can form a tetrahedron stabilized by central interacting C-terminal NC1 trimers. Post-translationally, prolines at the third position of the tripeptide repeating unit (G-X-Y) are hydroxylated in some or all of the chains. Proteolytically cleaved by neutrophil elastase, in vitro. Proteolytic processing produces the C-terminal NC1 domain fragment, vastatin. As to expression, expressed primarily in the subendothelium of large blood vessels. Also expressed in arterioles and venules in muscle, heart, kidney, spleen, umbilical cord, liver and lung and is also found in connective tissue layers around hair follicles, around nerve bundles in muscle, in the dura of the optic nerve, in cornea and sclera, and in the perichondrium of cartilaginous tissues. In the kidney, expressed in mesangial cells, glomerular endothelial cells, and tubular epithelial cells. Also expressed in mast cells, and in astrocytes during the repair process. Expressed in Descemet's membrane. Specifically expressed in peritoneal fibroblasts and mesothelial cells.

It is found in the secreted. The protein localises to the extracellular space. It localises to the extracellular matrix. The protein resides in the basement membrane. Its function is as follows. Macromolecular component of the subendothelium. Major component of the Descemet's membrane (basement membrane) of corneal endothelial cells. Also a component of the endothelia of blood vessels. Necessary for migration and proliferation of vascular smooth muscle cells and thus, has a potential role in the maintenance of vessel wall integrity and structure, in particular in atherogenesis. Vastatin, the C-terminal fragment comprising the NC1 domain, inhibits aortic endothelial cell proliferation and causes cell apoptosis. This is Collagen alpha-1(VIII) chain (COL8A1) from Homo sapiens (Human).